Here is a 141-residue protein sequence, read N- to C-terminus: Large ribosomal subunit protein uL11 (141 aa).

Belongs to the universal ribosomal protein uL11 family. Part of the ribosomal stalk of the 50S ribosomal subunit. Interacts with L10 and the large rRNA to form the base of the stalk. L10 forms an elongated spine to which L12 dimers bind in a sequential fashion forming a multimeric L10(L12)X complex. One or more lysine residues are methylated.

Functionally, forms part of the ribosomal stalk which helps the ribosome interact with GTP-bound translation factors. This is Large ribosomal subunit protein uL11 from Roseobacter denitrificans (strain ATCC 33942 / OCh 114) (Erythrobacter sp. (strain OCh 114)).